The following is a 2798-amino-acid chain: Nipped-B-like protein (2798 aa).

Composition is skewed to polar residues over residues leucine 128–proline 173 and histidine 191–serine 208. The disordered stretch occupies residues leucine 128–glutamine 338. Phosphoserine is present on residues serine 150 and serine 162. The span at histidine 234–histidine 249 shows a compositional bias: basic and acidic residues. Phosphoserine is present on residues serine 243, serine 256, serine 274, serine 280, serine 284, serine 301, serine 306, serine 318, and serine 350. The segment covering arginine 482–lysine 500 has biased composition (basic and acidic residues). The tract at residues arginine 482–leucine 940 is disordered. The span at proline 523 to glycine 534 shows a compositional bias: polar residues. Basic and acidic residues-rich tracts occupy residues aspartate 562–glutamine 572, proline 593–proline 625, lysine 634–glutamine 663, lysine 672–aspartate 685, and glutamate 694–lysine 899. Residues threonine 713 and threonine 746 each carry the phosphothreonine modification. At serine 906 the chain carries Phosphoserine. A compositionally biased stretch (basic and acidic residues) spans asparagine 908–alanine 933. Positions asparagine 990–serine 1003 match the PxVxL motif motif. Disordered regions lie at residues isoleucine 1011–valine 1041 and glutamate 1054–glutamate 1186. Lysine 1076 carries the N6-acetyllysine modification. Serine 1083, serine 1084, and serine 1090 each carry phosphoserine. The segment covering serine 1083–phenylalanine 1094 has biased composition (acidic residues). Residues lysine 1103 to arginine 1133 show a composition bias toward basic and acidic residues. 3 positions are modified to phosphoserine: serine 1144, serine 1146, and serine 1148. Tyrosine 1153 is subject to Phosphotyrosine. At serine 1154 the chain carries Phosphoserine. Basic residues predominate over residues lysine 1165 to lysine 1176. Position 1183 is a phosphothreonine (threonine 1183). Serine 1191 carries the phosphoserine modification. Positions alanine 1685–glutamate 1705 are enriched in basic and acidic residues. Residues alanine 1685 to threonine 1706 are disordered. HEAT repeat units follow at residues alanine 1761–serine 1799, proline 1837–threonine 1875, tyrosine 1939–lysine 1978, valine 2221–methionine 2261, and leucine 2307–glycine 2345. The span at valine 2467 to glutamate 2483 shows a compositional bias: basic and acidic residues. Disordered regions lie at residues valine 2467 to asparagine 2514 and threonine 2645 to glutamate 2690. Phosphoserine occurs at positions 2487, 2503, 2505, 2507, 2509, 2646, and 2652. Residues glutamate 2504 to isoleucine 2513 show a composition bias toward acidic residues. The residue at position 2661 (threonine 2661) is a Phosphothreonine. Serine 2666 carries the post-translational modification Phosphoserine.

It belongs to the SCC2/Nipped-B family. Heterodimerizes with MAU2/SCC4 to form the cohesin loading complex. The NIPBL-MAU2 heterodimer interacts with the cohesin complex composed of SMC1A/B and SMC3 heterodimer, RAD21 and STAG1/SA1. NIPBL directly contacts all members of the complex, RAD21, SMC1A/B, SMC3 and STAG1. Interacts directly (via PxVxL motif) with CBX3 and CBX5. Interacts with ZNF609 (via N-terminus). Interacts with the multiprotein complex Integrator. Interacts with BRD4. Spermatocytes and oocytes (at protein level).

The protein localises to the nucleus. Its subcellular location is the chromosome. Functionally, plays an important role in the loading of the cohesin complex on to DNA. Forms a heterodimeric complex (also known as cohesin loading complex) with MAU2/SCC4 which mediates the loading of the cohesin complex onto chromatin. Plays a role in cohesin loading at sites of DNA damage. Its recruitment to double-strand breaks (DSBs) sites occurs in a CBX3-, RNF8- and RNF168-dependent manner whereas its recruitment to UV irradiation-induced DNA damage sites occurs in a ATM-, ATR-, RNF8- and RNF168-dependent manner. Along with ZNF609, promotes cortical neuron migration during brain development by regulating the transcription of crucial genes in this process. Preferentially binds promoters containing paused RNA polymerase II. Up-regulates the expression of SEMA3A, NRP1, PLXND1 and GABBR2 genes, among others. The polypeptide is Nipped-B-like protein (Nipbl) (Mus musculus (Mouse)).